We begin with the raw amino-acid sequence, 449 residues long: MSVKWEKTGKTSGELTFEISQEEVKKGLDQAFKRVKKNLRVPGFRKGHVSRVVFDQFYGEEALYEDALNIVLPEAYAAAVKEAGIDPVGQPQITPVSMDKNKPWEMKATVSVKPEVKLGDYKGIEVPKQSTRVLVKDVDAELNKRREQNAELVLKDGKAAKGDTVTIDYTGTIDGKPFDGGSAQNYSLELGSGTFIPGFEDQLIGHKAGDDVDVVVTFPEDYGAKDLAGKEAHFATKIHEVKSKELPKLDDEFAKDVDDSVESLDELKDKIKKDLKKHKEEDAKDAIQDAAIKGAVENATIDEVPQAMIDEDVQNQLNQYLGNMQRQGIDPQTYFKLTGTTEAQLREQLAKGAAERVKTNLVLEAIVAKEKLDASADEIKQEIKDLAHDYNMDEKVVRRSLSDDMLKHDIAIRKAIDLVADKAKQVAKKATKKSTAKKSTKEDEKKADK.

In terms of domain architecture, PPIase FKBP-type spans 162–247; sequence GDTVTIDYTG…IHEVKSKELP (86 aa). Positions 427 to 438 are enriched in basic residues; it reads AKKATKKSTAKK. The interval 427-449 is disordered; sequence AKKATKKSTAKKSTKEDEKKADK. Positions 439–449 are enriched in basic and acidic residues; it reads STKEDEKKADK.

The protein belongs to the FKBP-type PPIase family. Tig subfamily.

The protein localises to the cytoplasm. It catalyses the reaction [protein]-peptidylproline (omega=180) = [protein]-peptidylproline (omega=0). Involved in protein export. Acts as a chaperone by maintaining the newly synthesized protein in an open conformation. Functions as a peptidyl-prolyl cis-trans isomerase. The chain is Trigger factor from Lactobacillus gasseri (strain ATCC 33323 / DSM 20243 / BCRC 14619 / CIP 102991 / JCM 1131 / KCTC 3163 / NCIMB 11718 / NCTC 13722 / AM63).